We begin with the raw amino-acid sequence, 373 residues long: Flagellar P-ring protein (373 aa).

An N-terminal signal peptide occupies residues 1-26 (MKLFFRIVTLVAVVAMSLADMAPAWA).

It belongs to the FlgI family. The basal body constitutes a major portion of the flagellar organelle and consists of four rings (L,P,S, and M) mounted on a central rod.

It is found in the periplasm. It localises to the bacterial flagellum basal body. Its function is as follows. Assembles around the rod to form the L-ring and probably protects the motor/basal body from shearing forces during rotation. The chain is Flagellar P-ring protein from Rhizobium etli (strain ATCC 51251 / DSM 11541 / JCM 21823 / NBRC 15573 / CFN 42).